A 223-amino-acid polypeptide reads, in one-letter code: Ubiquitin carboxyl-terminal hydrolase isozyme L1 (223 aa).

Position 1 is an N-acetylmethionine (Met-1). Residues 2–221 (QLKPMEINPE…VRFSAVALCK (220 aa)) enclose the UCH catalytic domain. An interaction with ubiquitin region spans residues 5-10 (PMEINP). The Nucleophile role is filled by Cys-90. A Phosphoserine modification is found at Ser-125. His-161 acts as the Proton donor in catalysis. The segment at 211-216 (EVRFSA) is interaction with ubiquitin. A lipid anchor (S-farnesyl cysteine) is attached at Cys-220. Residues 221–223 (KAA) constitute a propeptide, removed in mature form.

It belongs to the peptidase C12 family. Monomer. Homodimer. Interacts with COPS5 and SNCA. O-glycosylated.

The protein localises to the cytoplasm. The protein resides in the endoplasmic reticulum membrane. The enzyme catalyses Thiol-dependent hydrolysis of ester, thioester, amide, peptide and isopeptide bonds formed by the C-terminal Gly of ubiquitin (a 76-residue protein attached to proteins as an intracellular targeting signal).. Its function is as follows. Ubiquitin-protein hydrolase involved both in the processing of ubiquitin precursors and of ubiquitinated proteins. This enzyme is a thiol protease that recognizes and hydrolyzes a peptide bond at the C-terminal glycine of ubiquitin. Also binds to free monoubiquitin and may prevent its degradation in lysosomes. The homodimer may have ATP-independent ubiquitin ligase activity. This is Ubiquitin carboxyl-terminal hydrolase isozyme L1 (UCHL1) from Equus caballus (Horse).